The chain runs to 256 residues: uncharacterized protein (256 aa).

2 disordered regions span residues 1–171 (MARG…QLKH) and 185–256 (NGQR…LYND). Positions 14 to 39 (KRRSKVQEEEEHVEGSEEEVEEPEQK) form a coiled coil. Composition is skewed to acidic residues over residues 21 to 35 (EEEE…EVEE) and 64 to 92 (SDDD…DNDE). The segment covering 108 to 129 (NRGDHESHDDNSDNEEQGDRGN) has biased composition (basic and acidic residues). A compositionally biased stretch (gly residues) spans 192–205 (KRGGPPRGSFGQRG). Residues 219 to 234 (RQGDTRDTRDTRDTRL) are compositionally biased toward basic and acidic residues.

This is an uncharacterized protein from Acanthamoeba polyphaga (Amoeba).